Consider the following 268-residue polypeptide: MGDEKPVIVMANRERDRELLIPVADSGDKDDGSSSKPSSSSSASSSSHQSSHETLSLFIRGWASKKFMTGCVILLPIAITFYITWWFIHFVDGFFSPIYAQLGINVFGFGFLTSIAFIFLVGVFMSSWLGASVLNLGEWFIKRMPFVRHIYNASKQISTAISPDQNTQAFKEVAIIRHPRVGEYAFGFITSTVVLQNYPTEEELCCVYVPTNHLYIGDILLVNSNDVIRPNLSVREGIEIVVSGGMSMPQILSTVDKPLASIDRATSL.

At 1 to 70 (MGDEKPVIVM…GWASKKFMTG (70 aa)) the chain is on the cytoplasmic side. The interval 21 to 48 (IPVADSGDKDDGSSSKPSSSSSASSSSH) is disordered. Residues 34-48 (SSKPSSSSSASSSSH) show a composition bias toward low complexity. A helical membrane pass occupies residues 71–91 (CVILLPIAITFYITWWFIHFV). The Extracellular segment spans residues 92-103 (DGFFSPIYAQLG). A helical transmembrane segment spans residues 104-124 (INVFGFGFLTSIAFIFLVGVF). The Cytoplasmic segment spans residues 125–268 (MSSWLGASVL…LASIDRATSL (144 aa)).

Belongs to the plant COV1 protein family. Mostly expressed in flowers and stems, and, to a lower extent, in roots and leaves.

The protein resides in the membrane. Involved in the regulation of vascular patterning in the stem, probably by negatively regulating the differentiation of vascular tissue. The protein is Protein CONTINUOUS VASCULAR RING 1 of Arabidopsis thaliana (Mouse-ear cress).